Reading from the N-terminus, the 276-residue chain is MHPAAEHSPLGKSSEYISTYTPSLLFPIPRAAKWAELGLSAETLPYKGVDFWNCFELSWLLPSGKPVVAIGEFSIPADSPNIIESKSFKLYLNSLNQTAFADTASLEATLRTDLSAAAGKPVTVRIRTLAESEAEGVMALPGVCIDDLDISVSNYEHPRPELLRCDDARVVEESVHSHLLKSNCPVTSQPDWGSVVVEYRGHALDHASLLEYIVSFRQHSDFHEQCVERIFLDLQRLLKPEKLTVYARYVRRGGLDINPYRSTEDVAFQNVRLARQ.

83-85 (IES) serves as a coordination point for substrate. Position 85 to 86 (85 to 86 (SK)) interacts with NADPH. Catalysis depends on Cys184, which acts as the Thioimide intermediate. The active-site Proton donor is Asp191. 223 to 224 (HE) provides a ligand contact to substrate. Residue 252–253 (RG) coordinates NADPH.

It belongs to the GTP cyclohydrolase I family. QueF type 2 subfamily. As to quaternary structure, homodimer.

The protein localises to the cytoplasm. The enzyme catalyses 7-aminomethyl-7-carbaguanine + 2 NADP(+) = 7-cyano-7-deazaguanine + 2 NADPH + 3 H(+). It participates in tRNA modification; tRNA-queuosine biosynthesis. In terms of biological role, catalyzes the NADPH-dependent reduction of 7-cyano-7-deazaguanine (preQ0) to 7-aminomethyl-7-deazaguanine (preQ1). This Pseudomonas fluorescens (strain SBW25) protein is NADPH-dependent 7-cyano-7-deazaguanine reductase.